Reading from the N-terminus, the 1153-residue chain is Duffy receptor beta form (1153 aa).

The N-terminal stretch at 1 to 21 (MEGKKKRPLFFLLVLLLSHKA) is a signal peptide. Residues 22-1085 (NNVLFERMKG…YECFTKGSST (1064 aa)) are Extracellular-facing. Asn-134, Asn-179, and Asn-202 each carry an N-linked (GlcNAc...) asparagine glycan. Cystine bridges form between Cys-214/Cys-243 and Cys-227/Cys-234. Residues Asn-252 and Asn-348 are each glycosylated (N-linked (GlcNAc...) asparagine). Disulfide bonds link Cys-297-Cys-374, Cys-412-Cys-429, Cys-424-Cys-504, and Cys-433-Cys-502. N-linked (GlcNAc...) asparagine glycans are attached at residues Asn-430 and Asn-467. Disordered regions lie at residues 520-545 (LKSAPKLETQRSHSTIQPMSSSGAEK), 565-591 (DEAAKGDGQNGNQTVAESNIKGTDNIE), 612-631 (RGATDITETGEEKLNTSYSG), and 655-981 (ENSE…LYSH). Polar residues-rich tracts occupy residues 531-542 (SHSTIQPMSSSG) and 574-586 (NGNQTVAESNIKG). Asn-576 and Asn-626 each carry an N-linked (GlcNAc...) asparagine glycan. Basic and acidic residues predominate over residues 661 to 675 (LETKHKIFEPSKDNS). Residues 677–733 (NSENSGSMEFKATSSNPITEAVESSSAEGQVQEDSAHRSVNTGRDNSTISAATSDDG) show a composition bias toward polar residues. Asn-722 carries N-linked (GlcNAc...) asparagine glycosylation. The segment covering 791-800 (IDGKNVDIAE) has biased composition (basic and acidic residues). Polar residues predominate over residues 819–834 (TDNGNVPRSGNKQNEG). N-linked (GlcNAc...) asparagine glycans are attached at residues Asn-847 and Asn-856. Residues 867 to 878 (GNEKDFQKHDFM) show a composition bias toward basic and acidic residues. Over residues 884–942 (NDQTSSDQTSSDQTSSNQTSSDQTSSNQTSSDQTSSDQISSDQTSSDQTSSNQTSSDQT) the composition is skewed to low complexity. N-linked (GlcNAc...) asparagine glycosylation is found at Asn-900, Asn-910, and Asn-935. Residues 945 to 969 (TEEHHRDNVRNPEIKSSEDMSKGDF) show a composition bias toward basic and acidic residues. Over residues 971-981 (RNSNSNELYSH) the composition is skewed to polar residues. The helical transmembrane segment at 1086 to 1106 (GIGIVYFATGGAFLIILLLFV) threads the bilayer. The Cytoplasmic portion of the chain corresponds to 1107-1153 (SKNVASNDYEEEATFDEFVEYSDDIHRTPLMPNHIEHMQQFTPLDYS).

The protein resides in the membrane. Binds to Neu5Gc-sialylated receptors on macaque erythrocytes. The protein is Duffy receptor beta form of Plasmodium knowlesi.